Reading from the N-terminus, the 556-residue chain is MRRFVYCKVVLATSLMWVLVDVFLLLYFSECNKCDDKKERSLLPALRAVISRNQEGPGEMGKAVLIPKDDQEKMKELFKINQFNLMASDLIALNRSLPDVRLEGCKTKVYPDELPNTSVVIVFHNEAWSTLLRTVYSVINRSPHYLLSEVILVDDASERDFLKLTLENYVKTLEVPVKIIRMEERSGLIRARLRGAAASKGQVITFLDAHCECTLGWLEPLLARIKEDRKTVVCPIIDVISDDTFEYMAGSDMTYGGFNWKLNFRWYPVPQREMDRRKGDRTLPVRTPTMAGGLFSIDRNYFEEIGTYDAGMDIWGGENLEMSFRIWQCGGSLEIVTCSHVGHVFRKATPYTFPGGTGHVINKNNRRLAEVWMDEFKDFFYIISPGVVKVDYGDVSVRKTLRENLKCKPFSWYLENIYPDSQIPRRYYSLGEIRNVETNQCLDNMGRKENEKVGIFNCHGMGGNQVFSYTADKEIRTDDLCLDVSRLSGPVIMLKCHHMRGNQLWEYDAERLTLRHANSNQCLDEPSEEDKMVPTMQDCSGSRSQQWLLRNMTLGT.

Residues 1–4 lie on the Cytoplasmic side of the membrane; that stretch reads MRRF. Residues 5–27 traverse the membrane as a helical; Signal-anchor for type II membrane protein segment; it reads VYCKVVLATSLMWVLVDVFLLLY. Topologically, residues 28–556 are lumenal; that stretch reads FSECNKCDDK…WLLRNMTLGT (529 aa). 2 N-linked (GlcNAc...) asparagine glycosylation sites follow: N94 and N116. Cystine bridges form between C105–C338, C329–C407, C441–C458, C481–C496, and C522–C539. Residues 114-224 form a catalytic subdomain A region; sequence LPNTSVVIVF…LGWLEPLLAR (111 aa). Positions 155 and 185 each coordinate substrate. The Mn(2+) site is built by D208 and H210. Residues 284–346 are catalytic subdomain B; sequence PVRTPTMAGG…TCSHVGHVFR (63 aa). Substrate is bound at residue W315. H343 is a binding site for Mn(2+). The substrate site is built by R346 and Y351. The Ricin B-type lectin domain maps to 428–550; sequence YSLGEIRNVE…GSRSQQWLLR (123 aa). N551 carries an N-linked (GlcNAc...) asparagine glycan.

It belongs to the glycosyltransferase 2 family. GalNAc-T subfamily. Mn(2+) serves as cofactor. In terms of tissue distribution, specifically expressed in neuronal cells. Not expressed in glial cells such as astrocytes. Expressed at low level.

It is found in the golgi apparatus membrane. The enzyme catalyses L-seryl-[protein] + UDP-N-acetyl-alpha-D-galactosamine = a 3-O-[N-acetyl-alpha-D-galactosaminyl]-L-seryl-[protein] + UDP + H(+). The catalysed reaction is L-threonyl-[protein] + UDP-N-acetyl-alpha-D-galactosamine = a 3-O-[N-acetyl-alpha-D-galactosaminyl]-L-threonyl-[protein] + UDP + H(+). Its pathway is protein modification; protein glycosylation. Functionally, catalyzes the initial reaction in O-linked oligosaccharide biosynthesis, the transfer of an N-acetyl-D-galactosamine (GalNAc) residue from UDP-GalNAc to a serine or threonine residue on the protein receptor. Generates GalNAc-O-Ser/Thr structure also known as Tn antigen, which itself is immunogenic but also serves as a precursor for the synthesis of different mucin-type O-glycan core structures. Contributes to the synthesis of O-linked glycans on mucins and proteoglycans of the central nervous system. Can glycosylate both unmodified peptides and glycopeptides that already contain an O-linked GalNAc sugar. Transfers GalNAc to Thr-/Ser-rich tandem repeats GTTPSPVPTTSTTSAP of MUC5AC. Transfers GalNAc to three consecutive serine/threonine residues on SDC3 forming a triplet-Tn epitope expressed in Purkinje cells of the developing brain. May promote neurogenesis through glycosylation and stabilization of PDPN. The sequence is that of Polypeptide N-acetylgalactosaminyltransferase 13 (Galnt13) from Mus musculus (Mouse).